The sequence spans 304 residues: Recombination-associated protein RdgC (304 aa).

The protein belongs to the RdgC family.

It localises to the cytoplasm. The protein resides in the nucleoid. Functionally, may be involved in recombination. The polypeptide is Recombination-associated protein RdgC (Shewanella baltica (strain OS185)).